We begin with the raw amino-acid sequence, 302 residues long: Putative F-box protein At1g32420 (302 aa).

Over residues 1 to 10 (MKRGNEENNH) the composition is skewed to basic and acidic residues. The tract at residues 1-27 (MKRGNEENNHKTSSSSSTQRLSRRKIS) is disordered. The F-box domain maps to 31-78 (KSGNVNIPLDLTVEILKKLPAKSLLRFQCVSKQWLSIISSRRDFIDSI).

This is Putative F-box protein At1g32420 from Arabidopsis thaliana (Mouse-ear cress).